Here is a 280-residue protein sequence, read N- to C-terminus: Phosphatidylserine decarboxylase proenzyme (280 aa).

Catalysis depends on charge relay system; for autoendoproteolytic cleavage activity residues Asp90, His146, and Ser247. Ser247 acts as the Schiff-base intermediate with substrate; via pyruvic acid; for decarboxylase activity in catalysis. Ser247 is subject to Pyruvic acid (Ser); by autocatalysis.

The protein belongs to the phosphatidylserine decarboxylase family. PSD-B subfamily. Prokaryotic type I sub-subfamily. As to quaternary structure, heterodimer of a large membrane-associated beta subunit and a small pyruvoyl-containing alpha subunit. It depends on pyruvate as a cofactor. Post-translationally, is synthesized initially as an inactive proenzyme. Formation of the active enzyme involves a self-maturation process in which the active site pyruvoyl group is generated from an internal serine residue via an autocatalytic post-translational modification. Two non-identical subunits are generated from the proenzyme in this reaction, and the pyruvate is formed at the N-terminus of the alpha chain, which is derived from the carboxyl end of the proenzyme. The autoendoproteolytic cleavage occurs by a canonical serine protease mechanism, in which the side chain hydroxyl group of the serine supplies its oxygen atom to form the C-terminus of the beta chain, while the remainder of the serine residue undergoes an oxidative deamination to produce ammonia and the pyruvoyl prosthetic group on the alpha chain. During this reaction, the Ser that is part of the protease active site of the proenzyme becomes the pyruvoyl prosthetic group, which constitutes an essential element of the active site of the mature decarboxylase.

It is found in the cell membrane. It catalyses the reaction a 1,2-diacyl-sn-glycero-3-phospho-L-serine + H(+) = a 1,2-diacyl-sn-glycero-3-phosphoethanolamine + CO2. It participates in phospholipid metabolism; phosphatidylethanolamine biosynthesis; phosphatidylethanolamine from CDP-diacylglycerol: step 2/2. Catalyzes the formation of phosphatidylethanolamine (PtdEtn) from phosphatidylserine (PtdSer). This Myxococcus xanthus (strain DK1622) protein is Phosphatidylserine decarboxylase proenzyme.